We begin with the raw amino-acid sequence, 180 residues long: Large ribosomal subunit protein uL5c (180 aa).

It belongs to the universal ribosomal protein uL5 family. As to quaternary structure, part of the 50S ribosomal subunit; contacts the 5S rRNA.

The protein resides in the plastid. It is found in the chloroplast. Functionally, binds 5S rRNA, forms part of the central protuberance of the 50S subunit. This Tetradesmus obliquus (Green alga) protein is Large ribosomal subunit protein uL5c (rpl5).